The following is a 230-amino-acid chain: Ribonuclease 3 (230 aa).

The region spanning 1–134 (MKQLEELLST…FLGALLLDKG (134 aa)) is the RNase III domain. Glutamate 47 is a binding site for Mg(2+). Residue aspartate 51 is part of the active site. Mg(2+) contacts are provided by aspartate 120 and glutamate 123. Glutamate 123 is an active-site residue. In terms of domain architecture, DRBM spans 160 to 229 (DYKTCLQEFL…AKNALAQLSE (70 aa)).

The protein belongs to the ribonuclease III family. In terms of assembly, homodimer. The cofactor is Mg(2+).

The protein resides in the cytoplasm. It catalyses the reaction Endonucleolytic cleavage to 5'-phosphomonoester.. Digests double-stranded RNA. Involved in the processing of primary rRNA transcript to yield the immediate precursors to the large and small rRNAs (23S and 16S). Processes some mRNAs, and tRNAs when they are encoded in the rRNA operon. Processes pre-crRNA and tracrRNA of type II CRISPR loci if present in the organism. This is Ribonuclease 3 from Streptococcus pyogenes serotype M28 (strain MGAS6180).